Reading from the N-terminus, the 409-residue chain is Single Ig IL-1-related receptor (409 aa).

Over 1–117 the chain is Extracellular; sequence MAGVCDMAPN…TLWRAGPAGH (117 aa). An Ig-like C2-type domain is found at 9–108; it reads PNFLSPSEDQ…VWNVSSHSFT (100 aa). 5 N-linked (GlcNAc...) asparagine glycosylation sites follow: asparagine 31, asparagine 58, asparagine 73, asparagine 85, and asparagine 101. A disulfide bond links cysteine 32 and cysteine 97. Residues 118–138 traverse the membrane as a helical; Signal-anchor for type III membrane protein segment; sequence VAAVLASLLVLVVLLLVALLY. Residues 139–409 are Cytoplasmic-facing; the sequence is VKCRLNMLLW…FYCLVSEDDV (271 aa). A TIR domain is found at 162–306; it reads KLYDAYVSYS…DFWKELQLAL (145 aa). Serine 382 carries the phosphoserine modification.

It belongs to the interleukin-1 receptor family. In terms of assembly, interacts with IL1R1, IRAK1, TLR4, TLR5, TLR9 and TRAF6. Upon IL-1 stimulation found in a complex at least composed of IL1R1, SIGIRR, MYD88, IRAK1 and TRAF6. Upon stimulation with LPC found in a complex at least composed of TLR4, SIG1IR, MYD88, IRAK1 and TRAF6. Interacts with PALM3. In terms of tissue distribution, expressed at high levels in kidney, and at moderate levels in colon, small intestine, lung, spleen and liver. Not expressed in brain and muscle. Expressed at high levels in epithelial cells, at moderate levels in splenocytes, and at low or undetectable levels in fibroblasts or endothelial cells. Expressed in mucosal and dendritic cells.

The protein resides in the membrane. Its function is as follows. Acts as a negative regulator of the Toll-like and IL-1R receptor signaling pathways. Attenuates the recruitment of receptor-proximal signaling components to the TLR4 receptor, probably through an TIR-TIR domain interaction with TLR4. Through its extracellular domain interferes with the heterodimerization of Il1R1 and IL1RAP. This chain is Single Ig IL-1-related receptor (Sigirr), found in Mus musculus (Mouse).